The following is a 521-amino-acid chain: Occludin (521 aa).

Topologically, residues 1 to 66 are cytoplasmic; that stretch reads MSSRPFESPP…KWTSPPGVIR (66 aa). An MARVEL domain is found at 60 to 268; the sequence is SPPGVIRILS…IIFFAVKTRR (209 aa). A helical transmembrane segment spans residues 67–89; that stretch reads ILSMLVIVMCIAIFGCVASTLAW. Residues 90-134 are Extracellular-facing; it reads DRGYGTGLMGGSIGYPYGSGFGSYGTGYGYGFGYGYGYGGYTDPR. A helical transmembrane segment spans residues 135–159; it reads AAKGFLLAMVAFCFIAALVIFVTSV. At 160-169 the chain is on the cytoplasmic side; sequence IRSDISRTRR. The helical transmembrane segment at 170-194 threads the bilayer; it reads YYLTVIILSAFLGVMMFIATIVYIM. Over 195–242 the chain is Extracellular; it reads GVNPTAQASGSLYSSQIYAMCNQFYASTATGLYMDQYLYHYCVVDPQE. A disulfide bond links C215 and C236. Residues 243–264 traverse the membrane as a helical segment; that stretch reads AIAIVLGFMVIVAFALIIFFAV. Residues 265–521 lie on the Cytoplasmic side of the membrane; it reads KTRRKMDRYD…MVGDYDRQKT (257 aa). S301 is subject to Phosphoserine. Positions 301–407 are disordered; it reads SAGTQDMPPP…ETDYTTGGES (107 aa). A Phosphothreonine modification is found at T304. A phosphoserine mark is found at S312, S320, and S339. Y367 carries the post-translational modification Phosphotyrosine. A phosphoserine mark is found at S368 and S369. Positions 380-389 are enriched in basic residues; the sequence is APSKGRTGRP. The segment covering 390 to 399 has biased composition (basic and acidic residues); sequence KRLEQDHYET. Phosphotyrosine is present on residues Y397 and Y401. T402 and T403 each carry phosphothreonine; by PKC/PRKCH. S407 carries the phosphoserine modification. An OCEL domain is found at 413–521; that stretch reads EDWIREYPPI…MVGDYDRQKT (109 aa). The stretch at 424-488 forms a coiled coil; it reads SDQQRQLYKR…EYNRLKQVKG (65 aa). At S489 the chain carries Phosphoserine.

The protein belongs to the ELL/occludin family. In terms of assembly, interacts with TJP1/ZO1. Interacts with VAPA. Interacts with CLDN1, CLDN6, CLDN9, CLDN11, CLDN12 and CLDN17. Interacts with PLSCR1. Interacts with LSR, ILDR1 and ILDR2. Interacts with TJP2/ZO2. Dephosphorylated by PTPRJ. Less-phosphorylated forms are found in basolateral membrane, cytosol and tight junction. More-heavily phosphorylated forms are concentrated exclusively in tight junction. In terms of tissue distribution, localized at tight junctions of both epithelial and endothelial cells.

The protein resides in the cell membrane. Its subcellular location is the cell junction. The protein localises to the tight junction. May play a role in the formation and regulation of the tight junction (TJ) paracellular permeability barrier. Interacts with ZO-1. This is Occludin (OCLN) from Canis lupus familiaris (Dog).